A 299-amino-acid polypeptide reads, in one-letter code: tRNA dimethylallyltransferase (299 aa).

11–18 (GPTAVGKT) provides a ligand contact to ATP. Residue 13–18 (TAVGKT) coordinates substrate. An interaction with substrate tRNA region spans residues 36 to 39 (DSQQ).

Belongs to the IPP transferase family. Monomer. It depends on Mg(2+) as a cofactor.

The catalysed reaction is adenosine(37) in tRNA + dimethylallyl diphosphate = N(6)-dimethylallyladenosine(37) in tRNA + diphosphate. Catalyzes the transfer of a dimethylallyl group onto the adenine at position 37 in tRNAs that read codons beginning with uridine, leading to the formation of N6-(dimethylallyl)adenosine (i(6)A). In Streptococcus pyogenes serotype M49 (strain NZ131), this protein is tRNA dimethylallyltransferase.